The primary structure comprises 537 residues: Lysine--tRNA ligase (537 aa).

A 'HIGH' region motif is present at residues proline 30–asparagine 38. Positions alanine 276–serine 280 match the 'KMSKS' region motif.

It belongs to the class-I aminoacyl-tRNA synthetase family.

The protein localises to the cytoplasm. It carries out the reaction tRNA(Lys) + L-lysine + ATP = L-lysyl-tRNA(Lys) + AMP + diphosphate. This is Lysine--tRNA ligase from Methanosarcina barkeri.